The sequence spans 280 residues: Undecaprenyl-diphosphatase (280 aa).

Helical transmembrane passes span 1 to 21 (MEWIQAAILGIVQGLTEFLPI), 40 to 60 (GAAFTAVSQLGTEAAVIVFFW), 89 to 109 (WLVVAGSIPIIVVGLFFQNAI), 116 to 136 (LWIVATTLIVFGVILAVADAV), 146 to 166 (LTVKHGILYGLAQCLALIPGV), 191 to 211 (FLLAIPAVLGSGFYELFKIVA), 227 to 247 (LATVIAFVVGYLIIGWFLKFI), and 260 to 280 (IALGLVVFVLLGFGVIPATLS).

This sequence belongs to the UppP family.

The protein localises to the cell membrane. The catalysed reaction is di-trans,octa-cis-undecaprenyl diphosphate + H2O = di-trans,octa-cis-undecaprenyl phosphate + phosphate + H(+). Its function is as follows. Catalyzes the dephosphorylation of undecaprenyl diphosphate (UPP). Confers resistance to bacitracin. The sequence is that of Undecaprenyl-diphosphatase from Renibacterium salmoninarum (strain ATCC 33209 / DSM 20767 / JCM 11484 / NBRC 15589 / NCIMB 2235).